The primary structure comprises 55 residues: A-type ATP synthase subunit G (55 aa).

As to quaternary structure, has multiple subunits, A(3), B(3), C, D, E, F, G, I and K(x); there may be a few other subunits as well.

It is found in the cell membrane. Component of the A-type ATP synthase that produces ATP from ADP in the presence of a proton gradient across the membrane. This Methanosarcina mazei (strain ATCC BAA-159 / DSM 3647 / Goe1 / Go1 / JCM 11833 / OCM 88) (Methanosarcina frisia) protein is A-type ATP synthase subunit G (atpG).